The chain runs to 371 residues: 4-hydroxybenzoate polyprenyltransferase, mitochondrial (371 aa).

The N-terminal 45 residues, 1 to 45, are a transit peptide targeting the mitochondrion; it reads MLGSCGAGLVRGLRAETQAWLWGTRGRSLALVHAARGLHAANWQP. Topologically, residues 46-83 are mitochondrial matrix; the sequence is SPGQGPRGRPLSLSAAAVVNSAPRPLQPYLRLMRLDKP. Residues 84–104 form a helical membrane-spanning segment; that stretch reads IGTWLLYLPCTWSIGLAADPG. Residues 105–108 are Mitochondrial intermembrane-facing; the sequence is CLPD. A helical transmembrane segment spans residues 109–129; the sequence is WYMLSLFGTGAVLMRGAGCTI. The Mitochondrial matrix portion of the chain corresponds to 130–171; it reads NDMWDRDYDKKVTRTASRPIAAGDISTFRSFVFLGGQLTLAL. The chain crosses the membrane as a helical span at residues 172–192; that stretch reads GVLLCLNYYSIALGAASLLLV. The Mitochondrial intermembrane segment spans residues 193–200; it reads TTYPLMKR. The helical transmembrane segment at 201 to 221 threads the bilayer; the sequence is ITYWPQLALGLTFNWGALLGW. At 222-231 the chain is on the mitochondrial matrix side; sequence SAVKGSCDPS. A helical membrane pass occupies residues 232-252; it reads VCLPLYFSGIMWTLIYDTIYA. The Mitochondrial intermembrane portion of the chain corresponds to 253-277; the sequence is HQDKKDDALIGLKSTALLFREDTKK. A helical transmembrane segment spans residues 278-298; that stretch reads WLSGFSVAMLGALSLVGVNSG. The Mitochondrial matrix portion of the chain corresponds to 299–300; the sequence is QT. The chain crosses the membrane as a helical span at residues 301 to 321; the sequence is MPYYTALAAVGAHLAHQIYTL. Residues 322-332 lie on the Mitochondrial intermembrane side of the membrane; that stretch reads DINRPEDCWEK. Residues 333-353 form a helical membrane-spanning segment; that stretch reads FTSNRTIGLIIFLGIVLGNLC. Residues 354-371 are Mitochondrial matrix-facing; the sequence is KAKETDKTRKNIENRMEN.

The protein belongs to the UbiA prenyltransferase family. Requires Mg(2+) as cofactor.

The protein resides in the mitochondrion inner membrane. The enzyme catalyses an all-trans-polyprenyl diphosphate + 4-hydroxybenzoate = a 4-hydroxy-3-(all-trans-polyprenyl)benzoate + diphosphate. The catalysed reaction is all-trans-decaprenyl diphosphate + 4-hydroxybenzoate = 4-hydroxy-3-(all-trans-decaprenyl)benzoate + diphosphate. It catalyses the reaction all-trans-nonaprenyl diphosphate + 4-hydroxybenzoate = 4-hydroxy-3-(all-trans-nonaprenyl)benzoate + diphosphate. It participates in cofactor biosynthesis; ubiquinone biosynthesis. Its function is as follows. Mediates the second step in the final reaction sequence of coenzyme Q (CoQ) biosynthesis. Catalyzes the prenylation of para-hydroxybenzoate (PHB) with an all-trans polyprenyl donor (such as all-trans-decaprenyl diphosphate). The length of the polyprenyl side chain varies depending on the species, in humans, the side chain is comprised of 10 isoprenyls (decaprenyl) producing CoQ10 (also known as ubiquinone), whereas rodents predominantly generate CoQ9. However, this specificity is not complete, human tissues have low amounts of CoQ9 and rodent organs contain some CoQ10. Plays a central role in the biosynthesis of CoQ10. CoQ10 is a vital molecule that transports electrons from mitochondrial respiratory chain complexes. CoQs also function as cofactors for uncoupling protein and play a role as regulators of the extracellularly-induced ceramide-dependent apoptotic pathway. Regulates mitochondrial permeability transition pore (mPTP) opening and ROS production (pivotal events in cell death) in a tissue specific manner. This Bos taurus (Bovine) protein is 4-hydroxybenzoate polyprenyltransferase, mitochondrial.